Consider the following 506-residue polypeptide: Maturase K (506 aa).

It belongs to the intron maturase 2 family. MatK subfamily.

The protein localises to the plastid. Its subcellular location is the chloroplast. Its function is as follows. Usually encoded in the trnK tRNA gene intron. Probably assists in splicing its own and other chloroplast group II introns. The polypeptide is Maturase K (Jurinea cyanoides).